Consider the following 277-residue polypeptide: 4-hydroxy-3-methylbut-2-enyl diphosphate reductase (277 aa).

Cysteine 12 serves as a coordination point for [4Fe-4S] cluster. Residues histidine 36 and histidine 70 each coordinate (2E)-4-hydroxy-3-methylbut-2-enyl diphosphate. Dimethylallyl diphosphate-binding residues include histidine 36 and histidine 70. Isopentenyl diphosphate contacts are provided by histidine 36 and histidine 70. Cysteine 92 is a [4Fe-4S] cluster binding site. Histidine 120 is a binding site for (2E)-4-hydroxy-3-methylbut-2-enyl diphosphate. Histidine 120 contacts dimethylallyl diphosphate. Residue histidine 120 participates in isopentenyl diphosphate binding. Residue glutamate 122 is the Proton donor of the active site. Threonine 158 contributes to the (2E)-4-hydroxy-3-methylbut-2-enyl diphosphate binding site. Cysteine 186 is a [4Fe-4S] cluster binding site. The (2E)-4-hydroxy-3-methylbut-2-enyl diphosphate site is built by serine 214, asparagine 216, and serine 258. Dimethylallyl diphosphate-binding residues include serine 214, asparagine 216, and serine 258. 3 residues coordinate isopentenyl diphosphate: serine 214, asparagine 216, and serine 258.

This sequence belongs to the IspH family. [4Fe-4S] cluster serves as cofactor.

The enzyme catalyses isopentenyl diphosphate + 2 oxidized [2Fe-2S]-[ferredoxin] + H2O = (2E)-4-hydroxy-3-methylbut-2-enyl diphosphate + 2 reduced [2Fe-2S]-[ferredoxin] + 2 H(+). It catalyses the reaction dimethylallyl diphosphate + 2 oxidized [2Fe-2S]-[ferredoxin] + H2O = (2E)-4-hydroxy-3-methylbut-2-enyl diphosphate + 2 reduced [2Fe-2S]-[ferredoxin] + 2 H(+). Its pathway is isoprenoid biosynthesis; dimethylallyl diphosphate biosynthesis; dimethylallyl diphosphate from (2E)-4-hydroxy-3-methylbutenyl diphosphate: step 1/1. It participates in isoprenoid biosynthesis; isopentenyl diphosphate biosynthesis via DXP pathway; isopentenyl diphosphate from 1-deoxy-D-xylulose 5-phosphate: step 6/6. Its function is as follows. Catalyzes the conversion of 1-hydroxy-2-methyl-2-(E)-butenyl 4-diphosphate (HMBPP) into a mixture of isopentenyl diphosphate (IPP) and dimethylallyl diphosphate (DMAPP). Acts in the terminal step of the DOXP/MEP pathway for isoprenoid precursor biosynthesis. The sequence is that of 4-hydroxy-3-methylbut-2-enyl diphosphate reductase from Campylobacter jejuni subsp. jejuni serotype O:6 (strain 81116 / NCTC 11828).